The chain runs to 428 residues: Serine--tRNA ligase (428 aa).

235–237 contacts L-serine; sequence TAE. 266–268 lines the ATP pocket; that stretch reads RSE. Glu-289 is a binding site for L-serine. An ATP-binding site is contributed by 353 to 356; that stretch reads EISS. Ser-389 contacts L-serine.

Belongs to the class-II aminoacyl-tRNA synthetase family. Type-1 seryl-tRNA synthetase subfamily. Homodimer. The tRNA molecule binds across the dimer.

The protein localises to the cytoplasm. The enzyme catalyses tRNA(Ser) + L-serine + ATP = L-seryl-tRNA(Ser) + AMP + diphosphate + H(+). It catalyses the reaction tRNA(Sec) + L-serine + ATP = L-seryl-tRNA(Sec) + AMP + diphosphate + H(+). It participates in aminoacyl-tRNA biosynthesis; selenocysteinyl-tRNA(Sec) biosynthesis; L-seryl-tRNA(Sec) from L-serine and tRNA(Sec): step 1/1. In terms of biological role, catalyzes the attachment of serine to tRNA(Ser). Is also able to aminoacylate tRNA(Sec) with serine, to form the misacylated tRNA L-seryl-tRNA(Sec), which will be further converted into selenocysteinyl-tRNA(Sec). The sequence is that of Serine--tRNA ligase from Shewanella pealeana (strain ATCC 700345 / ANG-SQ1).